Reading from the N-terminus, the 63-residue chain is Small ribosomal subunit protein eS17 (63 aa).

Belongs to the eukaryotic ribosomal protein eS17 family.

The chain is Small ribosomal subunit protein eS17 (rps17e) from Haloarcula marismortui (strain ATCC 43049 / DSM 3752 / JCM 8966 / VKM B-1809) (Halobacterium marismortui).